A 953-amino-acid chain; its full sequence is Isoleucine--tRNA ligase (953 aa).

The short motif at 58–68 (PYANGNIHLGH) is the 'HIGH' region element. L-isoleucyl-5'-AMP is bound at residue E565. Residues 606–610 (KMSKS) carry the 'KMSKS' region motif. K609 contacts ATP. 4 residues coordinate Zn(2+): C916, C919, C936, and C939.

It belongs to the class-I aminoacyl-tRNA synthetase family. IleS type 1 subfamily. As to quaternary structure, monomer. Requires Zn(2+) as cofactor.

It localises to the cytoplasm. The enzyme catalyses tRNA(Ile) + L-isoleucine + ATP = L-isoleucyl-tRNA(Ile) + AMP + diphosphate. In terms of biological role, catalyzes the attachment of isoleucine to tRNA(Ile). As IleRS can inadvertently accommodate and process structurally similar amino acids such as valine, to avoid such errors it has two additional distinct tRNA(Ile)-dependent editing activities. One activity is designated as 'pretransfer' editing and involves the hydrolysis of activated Val-AMP. The other activity is designated 'posttransfer' editing and involves deacylation of mischarged Val-tRNA(Ile). The polypeptide is Isoleucine--tRNA ligase (Colwellia psychrerythraea (strain 34H / ATCC BAA-681) (Vibrio psychroerythus)).